The chain runs to 292 residues: Protoheme IX farnesyltransferase (292 aa).

Transmembrane regions (helical) follow at residues 13-33, 35-55, 84-104, 106-126, 135-155, 161-181, 206-226, 231-251, and 263-283; these read ILFGNFITTLGGFFLAAQGHV, FLLLILTLLGTTFVVASGCVV, TALIFAFILGIIGFGILWFWV, PYSFSFAIIGFVVYVGFYSLW, TIIGSISGASPPVIGYTAVTH, ALLIFLAYGLWQMPHSWAIAI, VECLIYIVLFAAVLNGLYCFG, FFLLTFNVLTAYWLYLSIIGF, and LFLFSVILITLLSLSFSFTYQ.

This sequence belongs to the UbiA prenyltransferase family. Protoheme IX farnesyltransferase subfamily.

It localises to the cell inner membrane. The enzyme catalyses heme b + (2E,6E)-farnesyl diphosphate + H2O = Fe(II)-heme o + diphosphate. It functions in the pathway porphyrin-containing compound metabolism; heme O biosynthesis; heme O from protoheme: step 1/1. Its function is as follows. Converts heme B (protoheme IX) to heme O by substitution of the vinyl group on carbon 2 of heme B porphyrin ring with a hydroxyethyl farnesyl side group. The chain is Protoheme IX farnesyltransferase from Acinetobacter baylyi (strain ATCC 33305 / BD413 / ADP1).